The sequence spans 130 residues: Histidine triad nucleotide-binding protein 1 (130 aa).

One can recognise an HIT domain in the interval 22–130 (LFGKIIRKEI…GGRQLQWPPG (109 aa)). The Histidine triad motif motif lies at 114-118 (HLHLH).

The protein is Histidine triad nucleotide-binding protein 1 (hint-1) of Caenorhabditis elegans.